Reading from the N-terminus, the 130-residue chain is DNA-directed RNA polymerase subunit omega (130 aa).

The tract at residues 109–130 (EEELLKGLEGLAPPEEQPEEDE) is disordered.

Belongs to the RNA polymerase subunit omega family. The RNAP catalytic core consists of 2 alpha, 1 beta, 1 beta' and 1 omega subunit. When a sigma factor is associated with the core the holoenzyme is formed, which can initiate transcription.

The enzyme catalyses RNA(n) + a ribonucleoside 5'-triphosphate = RNA(n+1) + diphosphate. Functionally, promotes RNA polymerase assembly. Latches the N- and C-terminal regions of the beta' subunit thereby facilitating its interaction with the beta and alpha subunits. The polypeptide is DNA-directed RNA polymerase subunit omega (Rhodopseudomonas palustris (strain BisB5)).